The primary structure comprises 566 residues: MAAFTVIIIGGSISGLTLANVLEKYGIKYILLEKRPSIGPQLGATVVVHPSGLHLLSQLGLRERVEELATPVELQKAIGPDGTFVLNIAATNQCDRTIADALSTGYMPMFIARQDLIKVLYDNLQDKFRVHASLGLRELEWAGDKVKVTTTDGTSVVGDIVVGADGANSRTRAEIWKIADVEDPSYGSQQLAKSIACTYRCVFGMVDDGDSSLARTAYLAFQYNRAYTYLPTDSGRAYFLAFFKNPAKTVNDAIPRYSDQDEDADVAAHANDIIVPGLTFGDLYKRRTRCTLVPLQEYLLDKCFYKRVVLIGDAVHKLNPITGRGANLAIEGAALLGDLIKHALEKSLQPTDEMLQTAFFTYQQCTKSRAPSQIDDAHRVQSLAALENPLLKFMSLKLLKRATADKLALGVAVDFSTGHSMRYLPQLPQRGMVPLNKDVVANPEHRPASSTVLWIILMLGMASLGAVWQKHQRAEEDQPIHGYTLLTLSTFYNLMILFASAVHGSLGRRAVNLSFSDDSGMVPFYAVGHAPDKYRPTTPSRRVGLLVPGPSYLGSGGHFNGLLEVA.

Positions 1-19 (MAAFTVIIIGGSISGLTLA) are cleaved as a signal peptide. Residues E33, V47, R113, D313, and A326 each coordinate FAD. Helical transmembrane passes span 448–468 (ASST…GAVW) and 482–502 (GYTL…ASAV).

This sequence belongs to the paxM FAD-dependent monooxygenase family. FAD serves as cofactor.

Its subcellular location is the membrane. It carries out the reaction [(1'E)-3'-hydroxy-3',7'-dimethylocta-1',6'-dien-1'-yl]-quinolinone B + NADPH + O2 + H(+) = [(1'E)-5'-(3',3'-dimethyloxiran-2'-yl)-3'-hydroxy-3'-methylpent-1'-en-1'-yl]-quinolinone B + NADP(+) + H2O. Its pathway is secondary metabolite biosynthesis. It functions in the pathway alkaloid biosynthesis. The protein operates within mycotoxin biosynthesis. Its function is as follows. FAD-dependent monooxygenase; part of the gene cluster that mediates the biosynthesis of the aspoquinolone mycotoxins. Within the pathway, the FAD-dependent monooxygenase asqG catalyzes the epoxidation of the terminal C7'-C8' olefin to produce the intermediate [(1'E)-5'-(3',3'-dimethyloxiran-2'-yl)-3'-hydroxy-3'-methylpent-1'-en-1'-yl]-quinolinone B. The first step of the pathway is catalyzed by the nonribosomal peptide synthetase asqK that condenses anthranilic acid and O-methyl-L-tyrosine to produce 4'-methoxycyclopeptin. 4'-methoxycyclopeptin is then converted to 4'-methoxydehydrocyclopeptin by the ketoglutarate-dependent dioxygenase asqJ. AsqJ also converts its first product 4'-methoxydehydrocyclopeptin to 4'-methoxycyclopenin. The following conversion of 4'-methoxycyclopenin into 4'-methoxyviridicatin is catalyzed by the cyclopenase asqI. 4'-methoxyviridicatin is the precursor of quinolone natural products, and is further converted to quinolinone B. The prenyltransferase asqH1 then catalyzes the canonical Friedel-Crafts alkylation of quinolinone B with dimethylallyl cation to yield dimethylallyl quinolone, which is subjected to FAD-dependent dehydrogenation by the FAD-linked oxidoreductase asqF to yield conjugated aryl diene. The delta(3') double bond then serves as the site of the second alkylation with DMAPP catalyzed by the prenyltransferase asqH2 to yield a carbenium ion intermediate, which can be attacked by H(2)O to yield a styrenyl quinolone containing a C3'-hydroxyprenyl chain. The FAD-dependent monooxygenase asqG performs epoxidation of the terminal C7'-C8' olefin. Finally, after dehydratation of the epoxide at C3 by asqC, the quinolone epoxide rearrangement protein asqO catalyzes an enzymatic 3-exo-tet cyclization to yield the cyclopropyl-THF ring system in aspoquinolone. This chain is FAD-dependent monooxygenase asqG, found in Emericella nidulans (strain FGSC A4 / ATCC 38163 / CBS 112.46 / NRRL 194 / M139) (Aspergillus nidulans).